The following is a 103-amino-acid chain: Large ribosomal subunit protein bL21 (103 aa).

This sequence belongs to the bacterial ribosomal protein bL21 family. Part of the 50S ribosomal subunit. Contacts protein L20.

Functionally, this protein binds to 23S rRNA in the presence of protein L20. This chain is Large ribosomal subunit protein bL21, found in Acidithiobacillus ferrooxidans (strain ATCC 23270 / DSM 14882 / CIP 104768 / NCIMB 8455) (Ferrobacillus ferrooxidans (strain ATCC 23270)).